Here is a 456-residue protein sequence, read N- to C-terminus: Phosphomannomutase (456 aa).

Serine 98 functions as the Phosphoserine intermediate in the catalytic mechanism. Serine 98, aspartate 245, aspartate 247, and aspartate 249 together coordinate Mg(2+).

The protein belongs to the phosphohexose mutase family. It depends on Mg(2+) as a cofactor.

It catalyses the reaction alpha-D-mannose 1-phosphate = D-mannose 6-phosphate. It functions in the pathway nucleotide-sugar biosynthesis; GDP-alpha-D-mannose biosynthesis; alpha-D-mannose 1-phosphate from D-fructose 6-phosphate: step 2/2. Functionally, involved in the biosynthesis of the capsular polysaccharide colanic acid. The protein is Phosphomannomutase (manB) of Salmonella typhimurium (strain LT2 / SGSC1412 / ATCC 700720).